Consider the following 119-residue polypeptide: Large ribosomal subunit protein bL12 (119 aa).

The protein belongs to the bacterial ribosomal protein bL12 family. In terms of assembly, homodimer. Part of the ribosomal stalk of the 50S ribosomal subunit. Forms a multimeric L10(L12)X complex, where L10 forms an elongated spine to which 2 to 4 L12 dimers bind in a sequential fashion. Binds GTP-bound translation factors.

Forms part of the ribosomal stalk which helps the ribosome interact with GTP-bound translation factors. Is thus essential for accurate translation. The sequence is that of Large ribosomal subunit protein bL12 from Bacillus cytotoxicus (strain DSM 22905 / CIP 110041 / 391-98 / NVH 391-98).